A 137-amino-acid chain; its full sequence is Partner of bursicon (137 aa).

Residues 1-24 (MNIMITKIFFLVQLFYIVVSKSSA) form the signal peptide. 5 cysteine pairs are disulfide-bonded: C28–C86, C52–C101, C61–C127, C65–C129, and C83–C132. In terms of domain architecture, CTCK spans 28-123 (CETVASEVHV…NALMEVRLRE (96 aa)).

Heterodimer of burs and pburs.

The protein resides in the secreted. Functionally, final heterodimeric neurohormone released at the end of the molting cycle, involved in the sclerotization (tanning) of the insect cuticle, melanization and wing spreading. The polypeptide is Partner of bursicon (Bombyx mori (Silk moth)).